We begin with the raw amino-acid sequence, 116 residues long: Cocaine- and amphetamine-regulated transcript protein (116 aa).

The N-terminal stretch at 1-27 (MESPRLRLLPLLGAALLLLLPLLGALA) is a signal peptide. Tyr41 is modified (phosphotyrosine). Ser48 bears the Phosphoserine mark. 3 disulfide bridges follow: Cys82–Cys100, Cys88–Cys108, and Cys102–Cys115.

This sequence belongs to the CART family.

The protein localises to the secreted. Its function is as follows. Satiety factor closely associated with the actions of leptin and neuropeptide y; this anorectic peptide inhibits both normal and starvation-induced feeding and completely blocks the feeding response induced by neuropeptide Y and regulated by leptin in the hypothalamus. This is Cocaine- and amphetamine-regulated transcript protein (CARTPT) from Bos taurus (Bovine).